Consider the following 445-residue polypeptide: Argininosuccinate lyase (445 aa).

Belongs to the lyase 1 family. Argininosuccinate lyase subfamily.

It is found in the cytoplasm. The enzyme catalyses 2-(N(omega)-L-arginino)succinate = fumarate + L-arginine. The protein operates within amino-acid biosynthesis; L-arginine biosynthesis; L-arginine from L-ornithine and carbamoyl phosphate: step 3/3. The polypeptide is Argininosuccinate lyase (Xylella fastidiosa (strain Temecula1 / ATCC 700964)).